The following is a 152-amino-acid chain: UPF0336 protein Tfu_2666 (152 aa).

A MaoC-like domain is found at 7 to 116 (YLGRAYELPE…TTITDIKSLA (110 aa)).

It belongs to the UPF0336 family.

In Thermobifida fusca (strain YX), this protein is UPF0336 protein Tfu_2666.